Here is a 313-residue protein sequence, read N- to C-terminus: Aspartate carbamoyltransferase catalytic subunit (313 aa).

Carbamoyl phosphate contacts are provided by arginine 59 and threonine 60. L-aspartate is bound at residue lysine 87. Carbamoyl phosphate is bound by residues arginine 109, histidine 137, and glutamine 140. Arginine 170 and arginine 224 together coordinate L-aspartate. 2 residues coordinate carbamoyl phosphate: glycine 265 and proline 266.

This sequence belongs to the aspartate/ornithine carbamoyltransferase superfamily. ATCase family. As to quaternary structure, heterododecamer (2C3:3R2) of six catalytic PyrB chains organized as two trimers (C3), and six regulatory PyrI chains organized as three dimers (R2).

The enzyme catalyses carbamoyl phosphate + L-aspartate = N-carbamoyl-L-aspartate + phosphate + H(+). It functions in the pathway pyrimidine metabolism; UMP biosynthesis via de novo pathway; (S)-dihydroorotate from bicarbonate: step 2/3. Catalyzes the condensation of carbamoyl phosphate and aspartate to form carbamoyl aspartate and inorganic phosphate, the committed step in the de novo pyrimidine nucleotide biosynthesis pathway. This chain is Aspartate carbamoyltransferase catalytic subunit, found in Rhizobium meliloti (strain 1021) (Ensifer meliloti).